A 181-amino-acid polypeptide reads, in one-letter code: MKLLLLLLCLGLTLVCGHAEEASSTRGNLDVAKLNGDWFSIVVASNKREKIEENGSMRVFMQHIDVLENSLGFKFRIKENGECRELYLVAYKTPEDGEYFVEYDGGNTFTILKTDYDRYVMFHLINFKNGETFQLMVLYGRTKDLSSDIKEKFAKLCEAHGITRDNIIDLTKTDRCLQARG.

Positions 1–19 are cleaved as a signal peptide; it reads MKLLLLLLCLGLTLVCGHA. A glycan (N-linked (GlcNAc...) asparagine) is linked at Asn-54. Residues Cys-83 and Cys-176 are joined by a disulfide bond.

The protein belongs to the calycin superfamily. Lipocalin family. Abundant in the urine of adult male rats but absent from that of females.

Its subcellular location is the cytoplasm. It localises to the cytosol. The protein localises to the secreted. Its function is as follows. Major urinary proteins (Mups) bind and release pheromones. They may also protect pheromones from oxidation. In this context, they play a role in the regulation of social behaviors, such as aggression, mating, pup-suckling, territory establishment and dominance. Acts as a kairomone, detected by the prey vomeronasal organ and inducing fear reactions in mice. The sequence is that of Major urinary protein from Rattus norvegicus (Rat).